The sequence spans 228 residues: Protein JAZ7 (228 aa).

The Tify domain maps to 101-136 (LSPNESTLTIFYMGEVHIFPGISPEKAELIIDLVSK). The short motif at 176–199 (MARRATLARFLEKRKHRLIKARPY) is the Jas element. The short motif at 177–184 (ARRATLAR) is the Nuclear localization signal element.

Belongs to the TIFY/JAZ family. Interacts with MYC2 (via N-terminus). JAZ7 competes with MED25 for binding to MYC2. Interacts with MTB1 (via N-terminus).

The protein localises to the nucleus. In terms of biological role, repressor of jasmonate responses. The chain is Protein JAZ7 from Solanum lycopersicum (Tomato).